A 66-amino-acid polypeptide reads, in one-letter code: Large ribosomal subunit protein bL33c (66 aa).

The protein belongs to the bacterial ribosomal protein bL33 family.

It localises to the plastid. It is found in the chloroplast. The sequence is that of Large ribosomal subunit protein bL33c from Agrostis stolonifera (Creeping bentgrass).